The primary structure comprises 1406 residues: DNA-directed RNA polymerase subunit beta' (1406 aa).

Cysteine 70, cysteine 72, cysteine 85, and cysteine 88 together coordinate Zn(2+). Residues aspartate 460, aspartate 462, and aspartate 464 each contribute to the Mg(2+) site. Residues cysteine 814, cysteine 889, cysteine 896, and cysteine 899 each contribute to the Zn(2+) site.

This sequence belongs to the RNA polymerase beta' chain family. The RNAP catalytic core consists of 2 alpha, 1 beta, 1 beta' and 1 omega subunit. When a sigma factor is associated with the core the holoenzyme is formed, which can initiate transcription. Requires Mg(2+) as cofactor. The cofactor is Zn(2+).

It catalyses the reaction RNA(n) + a ribonucleoside 5'-triphosphate = RNA(n+1) + diphosphate. Functionally, DNA-dependent RNA polymerase catalyzes the transcription of DNA into RNA using the four ribonucleoside triphosphates as substrates. This Stenotrophomonas maltophilia (strain K279a) protein is DNA-directed RNA polymerase subunit beta'.